The primary structure comprises 124 residues: Fluoride-specific ion channel FluC (124 aa).

The next 4 helical transmembrane spans lie at 1-21 (MIALIAAVSAGGIAGTLLRFA), 37-57 (GTLAVNLVGCLLIGLLYGLFL), 69-89 (GLIVGFLGGLTTFSSFSLDTV), and 99-119 (LALGYTSISVVGGLLATWAGL). The Na(+) site is built by Gly76 and Thr79.

Belongs to the fluoride channel Fluc/FEX (TC 1.A.43) family.

It is found in the cell inner membrane. The catalysed reaction is fluoride(in) = fluoride(out). With respect to regulation, na(+) is not transported, but it plays an essential structural role and its presence is essential for fluoride channel function. Fluoride-specific ion channel. Important for reducing fluoride concentration in the cell, thus reducing its toxicity. The protein is Fluoride-specific ion channel FluC of Pseudomonas putida (strain ATCC 700007 / DSM 6899 / JCM 31910 / BCRC 17059 / LMG 24140 / F1).